Reading from the N-terminus, the 317-residue chain is Ferrochelatase (317 aa).

The Fe cation site is built by His192 and Glu271.

Belongs to the ferrochelatase family.

Its subcellular location is the cytoplasm. It catalyses the reaction heme b + 2 H(+) = protoporphyrin IX + Fe(2+). The protein operates within porphyrin-containing compound metabolism; protoheme biosynthesis; protoheme from protoporphyrin-IX: step 1/1. Catalyzes the ferrous insertion into protoporphyrin IX. The sequence is that of Ferrochelatase from Geobacter sp. (strain M21).